Here is a 1312-residue protein sequence, read N- to C-terminus: Rho GTPase-activating protein gacG (1312 aa).

Disordered stretches follow at residues 52–74, 111–158, 314–519, 762–831, 1185–1230, and 1282–1312; these read VENN…KRSQ, SNNN…SSSD, ISSS…PRNF, NSIS…SSTG, NNNN…SSSV, and TGTS…IVEE. Composition is skewed to low complexity over residues 53–67 and 111–146; these read ENNN…NSEN and SNNN…YSPR. Over residues 147–158 the composition is skewed to polar residues; sequence NNNNNFTESSSD. Composition is skewed to low complexity over residues 328-355, 373-397, and 414-436; these read TTAA…ANNS, HHSS…IGNS, and LNLT…NNGN. Over residues 437-449 the composition is skewed to polar residues; that stretch reads EVIQSSSSTSSPR. Low complexity predominate over residues 479–507; the sequence is SSTNSLNNSTSSLKSSNNNILQQQQQQQQ. Polar residues-rich tracts occupy residues 508-518 and 763-776; these read HYDSAPTTPRN and SIST…GNIA. A compositionally biased stretch (low complexity) spans 792 to 816; sequence NNNNNNNNNNNNNNNNNNNNNNNNN. One can recognise a Rho-GAP domain in the interval 1030 to 1212; sequence SKIDPITGFN…HHNSHHHRDN (183 aa). Residues 1196-1210 are compositionally biased toward basic residues; it reads HHHHHHHHHNSHHHR. 2 stretches are compositionally biased toward low complexity: residues 1213 to 1222 and 1282 to 1305; these read NNNNSNNNSS and TGTS…RSPS.

The protein localises to the cytoplasm. In terms of biological role, rho GTPase-activating protein involved in the signal transduction pathway. The chain is Rho GTPase-activating protein gacG (gacG) from Dictyostelium discoideum (Social amoeba).